The sequence spans 193 residues: Bcl-2-like protein 2 (193 aa).

Ala2 carries the post-translational modification N-acetylalanine. Positions 9 to 29 (DTRALVADFVGYKLRQKGYVC) match the BH4 motif. The short motif at 85-104 (ELFQGGPNWGRLVAFFVFGA) is the BH1 element. The BH2 motif lies at 136 to 151 (DWIHSSGGWAEFTALY).

Belongs to the Bcl-2 family. As to quaternary structure, interacts with HIF3A (via C-terminus domain). Interacts with BOP.

It is found in the mitochondrion membrane. Promotes cell survival. Blocks dexamethasone-induced apoptosis. Mediates survival of postmitotic Sertoli cells by suppressing death-promoting activity of BAX. The chain is Bcl-2-like protein 2 (BCL2L2) from Bos taurus (Bovine).